The following is a 23-amino-acid chain: Maculatin-1.2 (23 aa).

Alanine 23 bears the Alanine amide mark.

Expressed by the skin dorsal glands.

The protein localises to the secreted. Its function is as follows. Shows antibacterial activity against S.aureus and S.uberis. The protein is Maculatin-1.2 of Ranoidea genimaculata (Brown-spotted tree frog).